Consider the following 1386-residue polypeptide: DNA-directed RNA polymerase subunit beta (1386 aa).

It belongs to the RNA polymerase beta chain family. The RNAP catalytic core consists of 2 alpha, 1 beta, 1 beta' and 1 omega subunit. When a sigma factor is associated with the core the holoenzyme is formed, which can initiate transcription.

It catalyses the reaction RNA(n) + a ribonucleoside 5'-triphosphate = RNA(n+1) + diphosphate. Its function is as follows. DNA-dependent RNA polymerase catalyzes the transcription of DNA into RNA using the four ribonucleoside triphosphates as substrates. The polypeptide is DNA-directed RNA polymerase subunit beta (Nitratiruptor sp. (strain SB155-2)).